The sequence spans 534 residues: Membrane-bound lytic murein transglycosylase F (534 aa).

An N-terminal signal peptide occupies residues methionine 1–alanine 24. Residues cysteine 25 to isoleucine 285 are non-LT domain. Residues alanine 287–glutamate 534 form an LT domain region. Glutamate 330 is an active-site residue. The segment at valine 507–glutamate 534 is disordered. A compositionally biased stretch (low complexity) spans asparagine 520 to glutamate 534.

In the N-terminal section; belongs to the bacterial solute-binding protein 3 family. The protein in the C-terminal section; belongs to the transglycosylase Slt family.

The protein localises to the cell outer membrane. The enzyme catalyses Exolytic cleavage of the (1-&gt;4)-beta-glycosidic linkage between N-acetylmuramic acid (MurNAc) and N-acetylglucosamine (GlcNAc) residues in peptidoglycan, from either the reducing or the non-reducing ends of the peptidoglycan chains, with concomitant formation of a 1,6-anhydrobond in the MurNAc residue.. Functionally, murein-degrading enzyme that degrades murein glycan strands and insoluble, high-molecular weight murein sacculi, with the concomitant formation of a 1,6-anhydromuramoyl product. Lytic transglycosylases (LTs) play an integral role in the metabolism of the peptidoglycan (PG) sacculus. Their lytic action creates space within the PG sacculus to allow for its expansion as well as for the insertion of various structures such as secretion systems and flagella. This Vibrio campbellii (strain ATCC BAA-1116) protein is Membrane-bound lytic murein transglycosylase F.